The primary structure comprises 197 residues: Heart- and neural crest derivatives-expressed protein 1 (197 aa).

Disordered regions lie at residues 61–94 (VVGP…RRTE) and 155–184 (VDGK…KGRT). A compositionally biased stretch (basic residues) spans 78–90 (LGRRKGAPPKKER). Residues 80–132 (RRKGAPPKKERRRTESINSAFAELRECIPNVPADTKLSKIKTLRLATSYIGYL) form the bHLH domain.

As to quaternary structure, efficient DNA binding requires dimerization with another bHLH protein. Highly expressed in the adult heart and expressed at lower levels in the intestine and gall bladder.

The protein resides in the nucleus. The protein localises to the nucleolus. Functionally, plays an essential role in cardiac morphogenesis. The sequence is that of Heart- and neural crest derivatives-expressed protein 1 (hand1) from Xenopus laevis (African clawed frog).